The sequence spans 891 residues: MATQIDASSEAAAATAAAQHTPMMQQYLRIKSEHPDTLVFYRMGDFYELFFEDAEKAARLLDLTLTQRGASAGTPIKMAGVPHHAVEQYLAKLVKFGESAAICEQIGDPATSKGPVERKVVRVVTPGTLTDAALLSDKSDVFLLALCVGHNKRGVASNIGLAWLNLASGALRLAELAPDQLGAALERIRPAEILAADGTIESVPAGMGAITRVPAWHFDIASGTQRLCDQLEVASLDGFGAQALTSANGAAGALLIYAAATQGQQLRHVRSLKVENESEYIGLDPSTRRNLELTETLRGTESPTLYSLLDTCCTAMGSRLLRHWLHHPPRASVAAQARHQAIGALLDAPPNAGLDSLRSALRQIADVERITGRLALLSARPRDLSSLRDTFAALPALRERVAEIASNAAALGRLEAALEPPPGCLDLLTRAIAAEPAAMVRDGGVIARGYDAELDELRDISENCGQFLIDLETRERARTGISNLRVEYNKVHGFYIEVTRGQTDKVPDDYRRRQTLKNAERYITPELKTFEDKALSAQERALARERALYDGVLQALLPHIEGCQRVASGLAELDLLAAFAERARTLDWVAPEFTDEIGIEIDQGRHPVVEAQVEQFIANDCALNPERKLLLITGPNMGGKSTFMRQTALIALMAYVGSYVPAKAARFGPIDRIFTRIGAADDLAGGRSTFMVEMTEAAAILNDATPHSLVLMDEIGRGTSTFDGLALAWAIARHLLSHNRCYTLFATHYFELTQLPAEFPQAANVHLSAVEHGHGIVFLHAVEEGPANQSYGLQVAQLAGVPAPVIRAARKHLAHLEQQSAAQATPQLDLFAAPPVVDEPECNEPPAAATPHPALERLLELDPDDLKPRDALDLLYELHTLARSGPADAQR.

Position 634–641 (634–641 (GPNMGGKS)) interacts with ATP.

It belongs to the DNA mismatch repair MutS family.

This protein is involved in the repair of mismatches in DNA. It is possible that it carries out the mismatch recognition step. This protein has a weak ATPase activity. This Burkholderia mallei (strain NCTC 10247) protein is DNA mismatch repair protein MutS.